The chain runs to 648 residues: Macrolide export ATP-binding/permease protein MacB (648 aa).

In terms of domain architecture, ABC transporter spans 5–243 (LELCNVSRSY…QGVDAAVVNT (239 aa)). Residue 41 to 48 (GVSGSGKS) coordinates ATP. The next 5 membrane-spanning stretches (helical) occupy residues 273–293 (LLTMLGIIIGIASVVSIVVVG), 417–437 (ANVVGEVVLVGNMPVIVIGVA), 523–543 (LFLTLVAVISLVVGGIGVMNI), 578–598 (LVCLVGGALGISLSMFIAFML), and 611–631 (LTALASAFLCSTFTGILFGWL).

The protein belongs to the ABC transporter superfamily. Macrolide exporter (TC 3.A.1.122) family. As to quaternary structure, homodimer. Part of the tripartite efflux system MacAB-TolC, which is composed of an inner membrane transporter, MacB, a periplasmic membrane fusion protein, MacA, and an outer membrane component, TolC. The complex forms a large protein conduit and can translocate molecules across both the inner and outer membranes. Interacts with MacA.

The protein resides in the cell inner membrane. Part of the tripartite efflux system MacAB-TolC. MacB is a non-canonical ABC transporter that contains transmembrane domains (TMD), which form a pore in the inner membrane, and an ATP-binding domain (NBD), which is responsible for energy generation. Confers resistance against macrolides. The polypeptide is Macrolide export ATP-binding/permease protein MacB (Salmonella paratyphi A (strain ATCC 9150 / SARB42)).